A 366-amino-acid chain; its full sequence is GTP-binding protein 10 (366 aa).

The region spanning 13-148 is the Obg domain; sequence GNFIDNLRIF…RIVHLDLKVI (136 aa). Residues 149 to 344 form the OBG-type G domain; that stretch reads ADVGLVGFPN…LKSCIRKALD (196 aa). Residues 155-162, 202-206, and 278-281 contribute to the GTP site; these read GFPNAGKS, DLPGL, and NKMD. Residues 346 to 355 are compositionally biased toward basic and acidic residues; the sequence is QDGKESDAHR. The disordered stretch occupies residues 346 to 366; it reads QDGKESDAHRSKQLLNLQSSS.

The protein belongs to the TRAFAC class OBG-HflX-like GTPase superfamily. OBG GTPase family.

The protein resides in the nucleus. It localises to the nucleolus. In terms of biological role, may be involved in the ribosome maturation process. In Mus musculus (Mouse), this protein is GTP-binding protein 10 (Gtpbp10).